The sequence spans 238 residues: Lipoarabinomannan carrier protein LprG (238 aa).

Residues 1–26 (MQAPKHHRRLFAVLATLNTATAVIAG) form the signal peptide. The N-palmitoyl cysteine moiety is linked to residue Cys27. Cys27 carries S-diacylglycerol cysteine lipidation.

Belongs to the LppX/LprAFG lipoprotein family. Modified by Lgt on Cys-27 with an S-linked diacylglyceral, signal peptide is removed by LspA, Cys-27 is further modifed with a fatty acid on its amino group by Lnt yielding a triacylated protein. Probably glycosylated, which is required for T-cell activation.

It localises to the cell inner membrane. It is found in the secreted. The protein resides in the cell wall. Functionally, helps membrane protein ML0556 (P55) transport triacylglycerides (TAG) across the inner cell membrane into the periplasm and probably ultimately to the outer membrane. Binds TAG in its hydrophobic cavity and transfers it between lipid bilayers. TAG probably regulates lipid metabolism and growth regulation and plays a structural role in the outer membrane. Binds di- and triacylated phosphatidyl-myo-inositol mannosides (PIMs), and glycolipid lipoglycan modulins lipoarabinomannan (LAM) and lipomannan (LM), facilitating their recognition by TLR2. Required for activity of drug efflux transporter ML0556. Required, probably with ML0556, for normal surface localization of LAM. Its function is as follows. Constitutes a host TLR2 agonist (toll-like receptor) able to stimulate proliferation of CD4+ T-cells derived from a human leprosy patient following protein processing/presentation by MHC class II molecules in peripheral blood mononuclear cells. In Mycobacterium leprae (strain TN), this protein is Lipoarabinomannan carrier protein LprG.